Reading from the N-terminus, the 154-residue chain is Leghemoglobin-1 (154 aa).

Residues 3-151 form the Globin domain; sequence VLTDVQVALV…LAIIIKKEMK (149 aa). Residue Ser46 participates in heme b binding. Ser46 bears the Phosphoserine mark. His64 serves as a coordination point for O2. Residues Lys67, His98, and Lys101 each coordinate heme b. Residue Tyr139 is modified to Nitrated tyrosine.

It belongs to the plant globin family. In terms of assembly, monomer. Nitrated in effective nodules and particularly in hypoxic conditions; this mechanism may play a protective role in the symbiosis by buffering toxic peroxynitrite NO(2)(-). Nitration level decrease during nodule senescence. Post-translationally, phosphorylation at Ser-46 disrupts the molecular environment of its porphyrin ring oxygen binding pocket, thus leading to a reduced oxygen consumption and to the delivery of oxygen O(2) to symbiosomes. As to expression, accumulates in developing root nodules and present in roots, especially in the upper part. Detected in leaves at low levels.

The protein localises to the cytoplasm. It is found in the cytosol. It localises to the nucleus. Functionally, leghemoglobin that reversibly binds oxygen O(2) through a pentacoordinated heme iron. In root nodules, facilitates the diffusion of oxygen to the bacteroids while preventing the bacterial nitrogenase from being inactivated by buffering dioxygen, nitric oxide and carbon monoxide, and promoting the formation of reactive oxygen species (ROS, e.g. H(2)O(2)). This role is essential for symbiotic nitrogen fixation (SNF). The chain is Leghemoglobin-1 from Lupinus luteus (European yellow lupine).